Reading from the N-terminus, the 308-residue chain is Folate transporter 1, chloroplastic (308 aa).

Solcar repeat units follow at residues 4-94, 104-192, and 213-299; these read SWQW…AKQR, LSPA…LRKI, and ADYA…VLKL. 6 helical membrane-spanning segments follow: residues 10–30, 74–91, 110–130, 164–184, 216–236, and 274–293; these read ATAGAVAGFATVAAMHSLDVV, VIGSTVSWGLYFFFYGRA, LASAAEAGALVCLCTNPIWLV, ALYKGIVPGLVLVSHGAIQFT, AALGGSSKVAAVLLTYPFQVI, and GLTANLLKNVPASSITFIVY.

The protein belongs to the mitochondrial carrier (TC 2.A.29) family. As to expression, ubiquitous.

It localises to the plastid. The protein resides in the chloroplast membrane. Its function is as follows. Mediates folate import into chloroplast. The protein is Folate transporter 1, chloroplastic (FOLT1) of Arabidopsis thaliana (Mouse-ear cress).